A 166-amino-acid polypeptide reads, in one-letter code: MITVATAECFTLGKIGTTIHKIASGYEECKNHRYYNIINGNVKIISSSFIPSIEGAEKLLNLGAPLPKCDYEYSYSKAYTEKNDLKVAHILAKGLKNSLNCNIAIATTAGVGRGGICIISDKNEYLFTTDIEGDLISKKNIIQRQKNGIDKTINKFVEILKKEYFL.

It belongs to the UPF0254 family.

The chain is UPF0254 protein Maeo_0668 from Methanococcus aeolicus (strain ATCC BAA-1280 / DSM 17508 / OCM 812 / Nankai-3).